The chain runs to 179 residues: MKQFLDFLPLVVFFAFYKLYDIYAATSALIVATAIVLIYSWVRYRKIEKMALITFVLVAVFGGLTLFFHNDEFIKWKVTVIYALFAGALLISQWVMKKPLIQRMLGKELALPQQVWSKLNLAWALFFIACGLANIYIAFWLPQNIWVNFKVFGLTALTLIFTLLSGVYIYRHLPQEDKS.

5 consecutive transmembrane segments (helical) span residues 22-42 (IYAA…YSWV), 50-70 (MALI…FFHN), 76-96 (WKVT…QWVM), 121-141 (LAWA…AFWL), and 149-169 (FKVF…GVYI).

It belongs to the YciB family.

The protein localises to the cell inner membrane. In terms of biological role, plays a role in cell envelope biogenesis, maintenance of cell envelope integrity and membrane homeostasis. The chain is Inner membrane-spanning protein YciB from Salmonella agona (strain SL483).